A 261-amino-acid polypeptide reads, in one-letter code: Guanine nucleotide exchange factor BopE (261 aa).

Residues R241–G253 show a composition bias toward basic and acidic residues. The interval R241–A261 is disordered.

It belongs to the GEF (guanine exchange factor) SopE family. In terms of assembly, monomer. Interacts with human CDC42.

The protein resides in the secreted. In terms of biological role, activator for both CDC42 and RAC1 by directly interacting with these Rho GTPases and acting as a guanine nucleotide exchange factor (GEF). This activation results in actin cytoskeleton rearrangements and stimulates membrane ruffling, thus promoting bacterial entry into non-phagocytic cells. The protein is Guanine nucleotide exchange factor BopE (bopE) of Burkholderia thailandensis (strain ATCC 700388 / DSM 13276 / CCUG 48851 / CIP 106301 / E264).